Reading from the N-terminus, the 143-residue chain is Potassium voltage-gated channel subfamily E regulatory beta subunit 5 (143 aa).

2 N-linked (GlcNAc...) asparagine glycosylation sites follow: Asn2 and Asn25. Residues 61–81 form a helical membrane-spanning segment; that stretch reads LYILLIMIFYACLAGGLILAY. Topologically, residues 82–143 are cytoplasmic; the sequence is TRSRKLVEAK…PALAQGAERV (62 aa).

This sequence belongs to the potassium channel KCNE family. Interacts with KCNQ1; impairs KCNQ1 localization in lipid rafts and only conducts current upon strong and continued depolarization. As to expression, detected in embryonal dorsal root and nerve ganglia, in the somites and in myoepicardial layer of the developing heart wall. Detected at lower levels in the central nervous system (CNS) and in developing limb.

It is found in the membrane. In terms of biological role, potassium channel ancillary subunit that is essential for generation of some native K(+) currents by virtue of formation of heteromeric ion channel complex with voltage-gated potassium (Kv) channel pore-forming alpha subunits. Functions as an inhibitory beta-subunit of the repolarizing cardiac potassium ion channel KCNQ1. The protein is Potassium voltage-gated channel subfamily E regulatory beta subunit 5 (Kcne5) of Mus musculus (Mouse).